The following is a 43-amino-acid chain: METATILGILIAAAVVGITVLALDTAFGPPAAELSDPFEDHED.

A helical transmembrane segment spans residues 3 to 23; the sequence is TATILGILIAAAVVGITVLAL.

This sequence belongs to the PsbN family.

The protein resides in the cellular thylakoid membrane. Its function is as follows. May play a role in photosystem I and II biogenesis. In Microcystis aeruginosa (strain NIES-843 / IAM M-2473), this protein is Protein PsbN 1.